Consider the following 218-residue polypeptide: Ribonuclease HII (218 aa).

In terms of domain architecture, RNase H type-2 spans 12-206 (GRVAGVDEVG…VREALARSAL (195 aa)). Asp18, Glu19, and Asp115 together coordinate a divalent metal cation.

The protein belongs to the RNase HII family. It depends on Mn(2+) as a cofactor. Mg(2+) is required as a cofactor.

It localises to the cytoplasm. The enzyme catalyses Endonucleolytic cleavage to 5'-phosphomonoester.. Its function is as follows. Endonuclease that specifically degrades the RNA of RNA-DNA hybrids. The sequence is that of Ribonuclease HII from Rhodospirillum rubrum (strain ATCC 11170 / ATH 1.1.1 / DSM 467 / LMG 4362 / NCIMB 8255 / S1).